Here is a 318-residue protein sequence, read N- to C-terminus: NADH-ubiquinone oxidoreductase chain 1 (318 aa).

Transmembrane regions (helical) follow at residues 2-22, 70-90, 100-120, 147-167, 171-191, 223-243, 253-273, and 294-314; these read FFIN…FLTL, MFIL…IPLP, LGVL…LWSG, AIIL…TLII, HMWL…STLA, FFLA…ILFF, ELYS…FLWI, and LPLT…TASI.

This sequence belongs to the complex I subunit 1 family. As to quaternary structure, core subunit of respiratory chain NADH dehydrogenase (Complex I) which is composed of 45 different subunits.

The protein localises to the mitochondrion inner membrane. It catalyses the reaction a ubiquinone + NADH + 5 H(+)(in) = a ubiquinol + NAD(+) + 4 H(+)(out). Core subunit of the mitochondrial membrane respiratory chain NADH dehydrogenase (Complex I) which catalyzes electron transfer from NADH through the respiratory chain, using ubiquinone as an electron acceptor. Essential for the catalytic activity and assembly of complex I. This is NADH-ubiquinone oxidoreductase chain 1 (MT-ND1) from Canis lupus familiaris (Dog).